We begin with the raw amino-acid sequence, 259 residues long: Probable metal transport system ATP-binding protein CT_068 (259 aa).

An ABC transporter domain is found at 9-241; sequence WSVEDLCVNY…AIFQAYGCEL (233 aa). 41-48 is a binding site for ATP; sequence GPNGAGKS.

Belongs to the ABC transporter superfamily.

The protein resides in the cell inner membrane. Part of an ATP-driven transport system CT_067/CT_068/CT_069/CT_070 for a metal. Probably responsible for energy coupling to the transport system. This is Probable metal transport system ATP-binding protein CT_068 from Chlamydia trachomatis serovar D (strain ATCC VR-885 / DSM 19411 / UW-3/Cx).